Here is a 447-residue protein sequence, read N- to C-terminus: Adenylosuccinate synthetase (447 aa).

GTP-binding positions include 12–18 (GDEGKGK) and 40–42 (GHT). Residue aspartate 13 is the Proton acceptor of the active site. Mg(2+) is bound by residues aspartate 13 and glycine 40. IMP contacts are provided by residues 13-16 (DEGK), 38-41 (NAGH), threonine 128, arginine 142, glutamine 223, threonine 238, and arginine 302. Histidine 41 (proton donor) is an active-site residue. Residue 298 to 304 (TTTGRKR) participates in substrate binding. GTP-binding positions include arginine 304, 330-332 (KLD), and 412-414 (SLG).

Belongs to the adenylosuccinate synthetase family. Homodimer. It depends on Mg(2+) as a cofactor.

Its subcellular location is the cytoplasm. It carries out the reaction IMP + L-aspartate + GTP = N(6)-(1,2-dicarboxyethyl)-AMP + GDP + phosphate + 2 H(+). Its pathway is purine metabolism; AMP biosynthesis via de novo pathway; AMP from IMP: step 1/2. Functionally, plays an important role in the de novo pathway of purine nucleotide biosynthesis. Catalyzes the first committed step in the biosynthesis of AMP from IMP. This chain is Adenylosuccinate synthetase, found in Trichormus variabilis (strain ATCC 29413 / PCC 7937) (Anabaena variabilis).